The chain runs to 297 residues: 4-hydroxy-tetrahydrodipicolinate synthase (297 aa).

Residue Thr50 participates in pyruvate binding. The active-site Proton donor/acceptor is the Tyr138. Lys166 (schiff-base intermediate with substrate) is an active-site residue. A pyruvate-binding site is contributed by Ile208.

It belongs to the DapA family. In terms of assembly, homotetramer; dimer of dimers.

It is found in the cytoplasm. It carries out the reaction L-aspartate 4-semialdehyde + pyruvate = (2S,4S)-4-hydroxy-2,3,4,5-tetrahydrodipicolinate + H2O + H(+). The protein operates within amino-acid biosynthesis; L-lysine biosynthesis via DAP pathway; (S)-tetrahydrodipicolinate from L-aspartate: step 3/4. Catalyzes the condensation of (S)-aspartate-beta-semialdehyde [(S)-ASA] and pyruvate to 4-hydroxy-tetrahydrodipicolinate (HTPA). This is 4-hydroxy-tetrahydrodipicolinate synthase from Desulfotalea psychrophila (strain LSv54 / DSM 12343).